Reading from the N-terminus, the 186-residue chain is Auxin-responsive protein IAA4 (186 aa).

Residues 18-22 carry the EAR-like (transcriptional repression) motif; sequence LRLGL. The disordered stretch occupies residues 25–62; the sequence is TEETVSCGKSNKRVLPEATEKEIESTGKTETASPPKAQ. Positions 38-51 are enriched in basic and acidic residues; sequence VLPEATEKEIESTG. Positions 88-175 constitute a PB1 domain; sequence GNYVKVSMDG…SCKRLRIMKG (88 aa).

This sequence belongs to the Aux/IAA family. Homodimers and heterodimers. Interacts with TPL. Preferentially expressed in stems, leaves and flowers.

Its subcellular location is the nucleus. Functionally, aux/IAA proteins are short-lived transcriptional factors that function as repressors of early auxin response genes at low auxin concentrations. Repression is thought to result from the interaction with auxin response factors (ARFs), proteins that bind to the auxin-responsive promoter element (AuxRE). Formation of heterodimers with ARF proteins may alter their ability to modulate early auxin response genes expression. The polypeptide is Auxin-responsive protein IAA4 (IAA4) (Arabidopsis thaliana (Mouse-ear cress)).